The following is a 633-amino-acid chain: 1-deoxy-D-xylulose-5-phosphate synthase 2 (633 aa).

Thiamine diphosphate contacts are provided by residues H73 and 113–115; that span reads SHA. D145 contacts Mg(2+). Residues 146 to 147, N175, Y286, and E367 contribute to the thiamine diphosphate site; that span reads GA. Mg(2+) is bound at residue N175.

Belongs to the transketolase family. DXPS subfamily. As to quaternary structure, homodimer. Mg(2+) is required as a cofactor. It depends on thiamine diphosphate as a cofactor.

It catalyses the reaction D-glyceraldehyde 3-phosphate + pyruvate + H(+) = 1-deoxy-D-xylulose 5-phosphate + CO2. It participates in metabolic intermediate biosynthesis; 1-deoxy-D-xylulose 5-phosphate biosynthesis; 1-deoxy-D-xylulose 5-phosphate from D-glyceraldehyde 3-phosphate and pyruvate: step 1/1. In terms of biological role, catalyzes the acyloin condensation reaction between C atoms 2 and 3 of pyruvate and glyceraldehyde 3-phosphate to yield 1-deoxy-D-xylulose-5-phosphate (DXP). This Kitasatospora griseola (Streptomyces griseolosporeus) protein is 1-deoxy-D-xylulose-5-phosphate synthase 2.